We begin with the raw amino-acid sequence, 672 residues long: DNA ligase (672 aa).

NAD(+) is bound by residues 32–36 (DEKYD), 82–83 (SL), and Glu-113. The active-site N6-AMP-lysine intermediate is the Lys-115. NAD(+) is bound by residues Arg-136, Glu-173, Lys-290, and Lys-314. Zn(2+)-binding residues include Cys-408, Cys-411, Cys-427, and Cys-433. A BRCT domain is found at 592 to 672 (DNNNTLFRKK…EFLNIINVYL (81 aa)).

This sequence belongs to the NAD-dependent DNA ligase family. LigA subfamily. It depends on Mg(2+) as a cofactor. Requires Mn(2+) as cofactor.

The enzyme catalyses NAD(+) + (deoxyribonucleotide)n-3'-hydroxyl + 5'-phospho-(deoxyribonucleotide)m = (deoxyribonucleotide)n+m + AMP + beta-nicotinamide D-nucleotide.. Functionally, DNA ligase that catalyzes the formation of phosphodiester linkages between 5'-phosphoryl and 3'-hydroxyl groups in double-stranded DNA using NAD as a coenzyme and as the energy source for the reaction. It is essential for DNA replication and repair of damaged DNA. The chain is DNA ligase from Buchnera aphidicola subsp. Baizongia pistaciae (strain Bp).